Here is a 1276-residue protein sequence, read N- to C-terminus: Probable ubiquitin carboxyl-terminal hydrolase K02C4.3 (1276 aa).

The region spanning 168–762 (TGLYNSGNTC…SAYMLMYVRS (595 aa)) is the USP domain. C177 acts as the Nucleophile in catalysis. Positions 375–402 (SMDTEAATSSNLPGNSVENHPNPAAPEV) are disordered. Polar residues predominate over residues 380–393 (AATSSNLPGNSVEN). The active-site Proton acceptor is H707.

It belongs to the peptidase C19 family.

It catalyses the reaction Thiol-dependent hydrolysis of ester, thioester, amide, peptide and isopeptide bonds formed by the C-terminal Gly of ubiquitin (a 76-residue protein attached to proteins as an intracellular targeting signal).. The polypeptide is Probable ubiquitin carboxyl-terminal hydrolase K02C4.3 (Caenorhabditis elegans).